A 379-amino-acid chain; its full sequence is Cobalt-precorrin-5B C(1)-methyltransferase (379 aa).

It belongs to the CbiD family.

The catalysed reaction is Co-precorrin-5B + S-adenosyl-L-methionine = Co-precorrin-6A + S-adenosyl-L-homocysteine. Its pathway is cofactor biosynthesis; adenosylcobalamin biosynthesis; cob(II)yrinate a,c-diamide from sirohydrochlorin (anaerobic route): step 6/10. In terms of biological role, catalyzes the methylation of C-1 in cobalt-precorrin-5B to form cobalt-precorrin-6A. In Salmonella arizonae (strain ATCC BAA-731 / CDC346-86 / RSK2980), this protein is Cobalt-precorrin-5B C(1)-methyltransferase.